A 129-amino-acid polypeptide reads, in one-letter code: Phosphoribosyl-AMP cyclohydrolase (129 aa).

Residue Asp84 coordinates Mg(2+). Residue Cys85 coordinates Zn(2+). Asp86 and Asp88 together coordinate Mg(2+). Residues Cys101 and Cys108 each contribute to the Zn(2+) site.

The protein belongs to the PRA-CH family. In terms of assembly, homodimer. Mg(2+) serves as cofactor. Requires Zn(2+) as cofactor.

It localises to the cytoplasm. It carries out the reaction 1-(5-phospho-beta-D-ribosyl)-5'-AMP + H2O = 1-(5-phospho-beta-D-ribosyl)-5-[(5-phospho-beta-D-ribosylamino)methylideneamino]imidazole-4-carboxamide. Its pathway is amino-acid biosynthesis; L-histidine biosynthesis; L-histidine from 5-phospho-alpha-D-ribose 1-diphosphate: step 3/9. Its function is as follows. Catalyzes the hydrolysis of the adenine ring of phosphoribosyl-AMP. The chain is Phosphoribosyl-AMP cyclohydrolase from Halobacterium salinarum (strain ATCC 700922 / JCM 11081 / NRC-1) (Halobacterium halobium).